The chain runs to 833 residues: MSGAYRGRGFGRGRFQSWKRGRGGGNFSGRWRERENRVDLNEASGKHASAQASQPLLQQSTLDQFIPYKGWKLYFSEVYSNNSPFIEKIQAFEKFFTRHIDLYDKDEIERKGSILVDFKELTKADEITNLIPDIENALRDAPEKTLACMGLAIHQVLTKDLERHAAELQAQEGLSNGGETMVNVPHIYARVYNYEPLTHLKNIRATCYGKYISIRGTVVRVSNIKPLCTNMAFQCAACGEIQSFPLPDGKYTLPTKCPVPACRGRSFAPLRSSPLTVTLDWQLIKIQELMSDAQREAGRIPRTIECELVHDLVDSCVPGDTVTVTGIVKVSNSEEGSRNKNDKCMFLLYIEANSVSNSKGPKAQTAEDGCKHGTLMEFSLKDLYAIREIQAEENLLKLVVNSLCPVIFGHELVKAGLTLALFGGSQKYADDKNRIPIRGDPHVLIVGDPGLGKSQMLQAACNVAPRGVYVCGNTTTSSGLTVTLSKDSSSGDFALEAGALVLGDQGICGIDEFDKMGNQHQALLEAMEQQSISLAKAGVVCSLPARTSIIAAANPVGGHYNKARTVSENLKMGSALLSRFDLVFILLDTPNEQHDHLLSEHVIAIRAGKQKAVSSATVTRVLSQDSNTSVLEVVSEKPLSERLKVAPGEQTDPIPHQLLRKYIGYARQYVHPRLSTDAAQALQDFYLELRKQSQRVGSSPITTRQLESLIRLTEARARLELREEATREDAEDIIEIMKHSMLGTYSDEFGNLDFERSQHGSGMSNRSTAKRFISALNSIAERTYNNIFQYHQLRQIAKELNIQVADFENFIGSLNDQGYLLKKGPKIYQLQTM.

The region spanning 395–602 (LLKLVVNSLC…QHDHLLSEHV (208 aa)) is the MCM domain. 447–454 (GDPGLGKS) contributes to the ATP binding site. Ser-623 carries the post-translational modification Phosphoserine.

It belongs to the MCM family. In terms of assembly, component of the MCM8-MCM9 complex, which forms a hexamer composed of MCM8 and MCM9. Interacts with the DNA mismatch repair (MMR) complex composed at least of MSH2, MSH3, MSH6, PMS1 and MLH1. Interacts with RAD51; the interaction recruits RAD51 to DNA damage sites. Interacts with the MRN complex composed of MRE11, RAD50 and NBN/NBS1. Interacts with CDC6 and ORC2. Interacts with HROB; the interaction recruits the MCM8-MCM9 complex to DNA damage sites.

It localises to the nucleus. Its subcellular location is the chromosome. It catalyses the reaction ATP + H2O = ADP + phosphate + H(+). Component of the MCM8-MCM9 complex, a complex involved in the repair of double-stranded DNA breaks (DBSs) and DNA interstrand cross-links (ICLs) by homologous recombination (HR). Required for DNA resection by the MRE11-RAD50-NBN/NBS1 (MRN) complex by recruiting the MRN complex to the repair site and by promoting the complex nuclease activity. Probably by regulating the localization of the MNR complex, indirectly regulates the recruitment of downstream effector RAD51 to DNA damage sites including DBSs and ICLs. The MCM8-MCM9 complex is dispensable for DNA replication and S phase progression. However, may play a non-essential for DNA replication: may be involved in the activation of the prereplicative complex (pre-RC) during G(1) phase by recruiting CDC6 to the origin recognition complex (ORC). Probably by regulating HR, plays a key role during gametogenesis. Stabilizes MCM9 protein. The protein is DNA helicase MCM8 (Mcm8) of Mus musculus (Mouse).